Reading from the N-terminus, the 923-residue chain is Meiotic recombination protein rec11 (923 aa).

An SCD domain is found at 278–365 (LFSRIHDIRA…DRFSLRIVEI (88 aa)).

This Schizosaccharomyces pombe (strain 972 / ATCC 24843) (Fission yeast) protein is Meiotic recombination protein rec11 (rec11).